The primary structure comprises 118 residues: Large ribosomal subunit protein bL20 (118 aa).

The protein belongs to the bacterial ribosomal protein bL20 family.

Functionally, binds directly to 23S ribosomal RNA and is necessary for the in vitro assembly process of the 50S ribosomal subunit. It is not involved in the protein synthesizing functions of that subunit. The protein is Large ribosomal subunit protein bL20 of Sulfurovum sp. (strain NBC37-1).